The sequence spans 472 residues: MSRRVVRQSKFRHVFGQAAKADQAYEDIRVSKVTWDSAFCAVNPKFLAIIVEAGGGGAFIVLPLAKTGRVDKNYPLVTGHTGPVLDIDWCPHNDNVIASASDDTTVMVWQIPDYTPVRNITEPVITLEGHSKRVGILSWHPTARNVLLSAGGDNVIIIWNVGTGEVLLSLDDIHPDVIHSVCWNSNGSLLATTCKDKTLRIIDPRKSQVVAERFAAHEGMRPMRAVFTRLGHIFTTGFTRMSQRELGLWDPNNFEEPVALQEMDTSNGVLLPFYDPDSSIVYLCGKGDSSIRYFEITDEPPFVHYLNTFSSKEPQRGMGFMPKRGLDVSKCEIARFYKLHERKCEPIVMTVPRKSDLFQDDLYPDTPGPEPALEADEWLSGQDAEPVLISLKEGYVPPKHREFRVTKRNILDVRPPASPRRSQSASEAPLSQQHTLETLLEEMKALRERVQAQEERITALENMLCELVDGTD.

WD repeat units lie at residues 79 to 119 (GHTG…PVRN), 129 to 169 (GHSK…VLLS), 173 to 212 (IHPD…VVAE), 216 to 259 (AHEG…EPVA), and 264 to 304 (DTSN…PFVH). The interval 409-434 (NILDVRPPASPRRSQSASEAPLSQQH) is disordered. The span at 419–429 (PRRSQSASEAP) shows a compositional bias: low complexity. Residues 430-469 (LSQQHTLETLLEEMKALRERVQAQEERITALENMLCELVD) adopt a coiled-coil conformation.

The polypeptide is Coronin-6 (Coro6) (Rattus norvegicus (Rat)).